Here is a 160-residue protein sequence, read N- to C-terminus: UPF0262 protein BSUIS_A0274 (160 aa).

The protein belongs to the UPF0262 family.

In Brucella suis (strain ATCC 23445 / NCTC 10510), this protein is UPF0262 protein BSUIS_A0274.